The chain runs to 335 residues: tRNA N6-adenosine threonylcarbamoyltransferase (335 aa).

The Fe cation site is built by H110 and H114. Substrate contacts are provided by residues 132-136, D165, G178, and N271; that span reads LVSGG. D299 provides a ligand contact to Fe cation.

This sequence belongs to the KAE1 / TsaD family. Requires Fe(2+) as cofactor.

The protein resides in the cytoplasm. The catalysed reaction is L-threonylcarbamoyladenylate + adenosine(37) in tRNA = N(6)-L-threonylcarbamoyladenosine(37) in tRNA + AMP + H(+). Functionally, required for the formation of a threonylcarbamoyl group on adenosine at position 37 (t(6)A37) in tRNAs that read codons beginning with adenine. Is involved in the transfer of the threonylcarbamoyl moiety of threonylcarbamoyl-AMP (TC-AMP) to the N6 group of A37, together with TsaE and TsaB. TsaD likely plays a direct catalytic role in this reaction. This Campylobacter jejuni subsp. jejuni serotype O:6 (strain 81116 / NCTC 11828) protein is tRNA N6-adenosine threonylcarbamoyltransferase.